Reading from the N-terminus, the 106-residue chain is Large ribosomal subunit protein uL24 (106 aa).

It belongs to the universal ribosomal protein uL24 family. In terms of assembly, part of the 50S ribosomal subunit.

In terms of biological role, one of two assembly initiator proteins, it binds directly to the 5'-end of the 23S rRNA, where it nucleates assembly of the 50S subunit. One of the proteins that surrounds the polypeptide exit tunnel on the outside of the subunit. The protein is Large ribosomal subunit protein uL24 of Bordetella bronchiseptica (strain ATCC BAA-588 / NCTC 13252 / RB50) (Alcaligenes bronchisepticus).